An 80-amino-acid chain; its full sequence is MDIQKQIVDILAEATGEDFSDNMDQELYESGIMDSMTTVQMLLTLQETFDITVPVSEFNRDDWNTPNKLVEQVKKLQDEE.

The Carrier domain maps to 1–77; the sequence is MDIQKQIVDI…KLVEQVKKLQ (77 aa). S35 is modified (O-(pantetheine 4'-phosphoryl)serine).

This sequence belongs to the DltC family. 4'-phosphopantetheine is transferred from CoA to a specific serine of apo-DCP.

The protein localises to the cytoplasm. It functions in the pathway cell wall biogenesis; lipoteichoic acid biosynthesis. Carrier protein involved in the D-alanylation of lipoteichoic acid (LTA). The loading of thioester-linked D-alanine onto DltC is catalyzed by D-alanine--D-alanyl carrier protein ligase DltA. The DltC-carried D-alanyl group is further transferred to cell membrane phosphatidylglycerol (PG) by forming an ester bond, probably catalyzed by DltD. D-alanylation of LTA plays an important role in modulating the properties of the cell wall in Gram-positive bacteria, influencing the net charge of the cell wall. In Lactobacillus delbrueckii subsp. bulgaricus (strain ATCC 11842 / DSM 20081 / BCRC 10696 / JCM 1002 / NBRC 13953 / NCIMB 11778 / NCTC 12712 / WDCM 00102 / Lb 14), this protein is D-alanyl carrier protein.